A 648-amino-acid chain; its full sequence is Shugoshin (648 aa).

Coiled-coil stretches lie at residues 95-122 (LMIKITDLETKISELVQENVQLRSRLSV) and 208-273 (DDRA…KDEA). Disordered regions lie at residues 188–239 (KVVG…RSSR), 262–334 (EADK…QEDA), 367–443 (VYRD…RPRR), 483–518 (TNRKLRKQREGVADSADVHGETDHEQDPEQSPAAED), and 628–648 (HRARAKAERQVGKKPAFKVST). 2 stretches are compositionally biased toward basic and acidic residues: residues 200 to 217 (VRGERETLDDRAQQHQEA) and 262 to 273 (EADKSRSAKDEA). Residues 306-315 (ASGTLTQSNE) are compositionally biased toward polar residues. Composition is skewed to basic and acidic residues over residues 424–440 (IVVDEVMPHNDYSDATR) and 490–509 (QREGVADSADVHGETDHEQD).

Belongs to the shugoshin family.

Its subcellular location is the nucleus. It is found in the chromosome. The protein localises to the centromere. Functionally, plays a central role in chromosome cohesion during cell division by preventing premature dissociation of cohesin complex from centromeres after prophase, when most of cohesin complex dissociates from chromosomes arms. May act by protecting RAD21 and or REC8 from cleavage by ESP1/separase. The polypeptide is Shugoshin (SGO1) (Eremothecium gossypii (strain ATCC 10895 / CBS 109.51 / FGSC 9923 / NRRL Y-1056) (Yeast)).